A 156-amino-acid polypeptide reads, in one-letter code: Snaclec subunit B (156 aa).

Positions 1 to 23 are cleaved as a signal peptide; it reads MGRSIFVNLGLLVVAFSLRGSEA. Intrachain disulfides connect Cys-25–Cys-36, Cys-53–Cys-144, and Cys-119–Cys-136. Residues 32-145 form the C-type lectin domain; sequence YDKYCYKVFD…CKSTLPFTCK (114 aa).

Belongs to the snaclec family. As to quaternary structure, heterodimer of subunits A and B; disulfide-linked. Expressed by the venom gland.

The protein localises to the secreted. Functionally, interferes with one step of hemostasis (modulation of platelet aggregation, or coagulation cascade, for example). This Philodryas olfersii (Green snake) protein is Snaclec subunit B.